A 171-amino-acid polypeptide reads, in one-letter code: Replication restart protein PriC (171 aa).

The protein belongs to the PriC family. As to quaternary structure, monomer. Component of the replication restart primosome, which is composed of PriA, PriB, PriC, DnaBe and DnaT; DnaG primase associates transiently with this complex. Interacts with the C-terminus of SSB. SSB interaction is required to load the main replicative helicase onto substrate replication forks. Interacts with helicase DnaB alone and in the DnaB-DnaC complex, probably 1:1 binding with DnaB.

Functionally, involved in the restart of stalled replication forks, which reloads the DnaB replicative helicase on sites other than the origin of replication. In vitro can load (E.coli) DnaB replicative helicase from a DnaB-DnaC complex on a single-stranded DNA (ssDNA)-binding protein (SSB)-coated stalled replication fork with no leading- or lagging-strand in the absence of other primosome proteins (PriA, PriB or DnaT). Binds SSB (tested with E.coli protein) and ssDNA. Complements priC in an E.coli priB-priC double deletion. This chain is Replication restart protein PriC, found in Cronobacter sakazakii (strain ATCC BAA-894) (Enterobacter sakazakii).